The chain runs to 355 residues: Glucose-6-phosphatase 2 (355 aa).

The Lumenal portion of the chain corresponds to M1 to T24. A helical transmembrane segment spans residues F25–L45. Residues C46–K56 lie on the Cytoplasmic side of the membrane. A helical membrane pass occupies residues M57–G77. Residues H78–H115 lie on the Lumenal side of the membrane. R79 is a substrate binding site. N-linked (GlcNAc...) asparagine glycosylation occurs at N92. The active-site Proton donor is H115. The helical transmembrane segment at A116–C136 threads the bilayer. Residues G137–H146 lie on the Cytoplasmic side of the membrane. The chain crosses the membrane as a helical span at residues R147–S167. Position 168 (R168) is a topological domain, lumenal. Position 168 (R168) interacts with substrate. Residues V169–V189 form a helical membrane-spanning segment. H174 acts as the Nucleophile in catalysis. Topologically, residues A190–N211 are cytoplasmic. Residues L212–L232 traverse the membrane as a helical segment. Topologically, residues L233–R261 are lumenal. A helical transmembrane segment spans residues N262–C282. At R283 to R293 the chain is on the cytoplasmic side. The helical transmembrane segment at L294–T314 threads the bilayer. Topologically, residues H315–H318 are lumenal. Residues L319–I339 traverse the membrane as a helical segment. Residues P340 to Q355 are Cytoplasmic-facing. The Prevents secretion from ER signature appears at K352 to Q355.

It belongs to the glucose-6-phosphatase family. In terms of processing, N-glycosylated; the non-glycosylated form is more unstable and is degraded through the proteasome. As to expression, specifically expressed in pancreas and also detected to a lower extent in testis. Expressed by most islet cells in the pancreas (at protein level).

It localises to the endoplasmic reticulum membrane. It catalyses the reaction D-glucose 6-phosphate + H2O = D-glucose + phosphate. The protein operates within carbohydrate biosynthesis; gluconeogenesis. Its function is as follows. May hydrolyze glucose-6-phosphate to glucose in the endoplasmic reticulum. May be responsible for glucose production through glycogenolysis and gluconeogenesis. The chain is Glucose-6-phosphatase 2 (G6PC2) from Homo sapiens (Human).